The sequence spans 278 residues: MGEWAFLGSLLDAVQLQSPLVGRLWLVIMLIFRILVLATVGGAVFEDEQEEFVCNTLQPGCRQTCYDRAFPVSHYRFWLFHILLLSAPPVLFVIYSMHQASKEAGGAQLAPPCARGRAEAPCSPCALRARRARRCYLLSVALRLLAELAFLGGQALLYGFRVDPHYACAGPPCPHTVDCFVSRPTEKTVFVVFYFAVGLLSALLSVAELGHLLWKGRQRAKLLPPPPPSPSLPSQRGDPDPFGPPAYAHRSPAGDSEGEGGSGHSKASLATVRQDLAI.

The Cytoplasmic segment spans residues 1–24; the sequence is MGEWAFLGSLLDAVQLQSPLVGRL. The chain crosses the membrane as a helical span at residues 25 to 45; that stretch reads WLVIMLIFRILVLATVGGAVF. Topologically, residues 46-76 are extracellular; the sequence is EDEQEEFVCNTLQPGCRQTCYDRAFPVSHYR. Residues 77-97 form a helical membrane-spanning segment; it reads FWLFHILLLSAPPVLFVIYSM. At 98–136 the chain is on the cytoplasmic side; sequence HQASKEAGGAQLAPPCARGRAEAPCSPCALRARRARRCY. A helical membrane pass occupies residues 137 to 157; that stretch reads LLSVALRLLAELAFLGGQALL. Residues 158 to 188 are Extracellular-facing; that stretch reads YGFRVDPHYACAGPPCPHTVDCFVSRPTEKT. A helical membrane pass occupies residues 189–209; sequence VFVVFYFAVGLLSALLSVAEL. Topologically, residues 210 to 278 are cytoplasmic; the sequence is GHLLWKGRQR…LATVRQDLAI (69 aa). The interval 223–278 is disordered; it reads LPPPPPSPSLPSQRGDPDPFGPPAYAHRSPAGDSEGEGGSGHSKASLATVRQDLAI.

Belongs to the connexin family. Delta-type subfamily. As to quaternary structure, a connexon is composed of a hexamer of connexins.

The protein resides in the cell membrane. Its subcellular location is the cell junction. It is found in the gap junction. One gap junction consists of a cluster of closely packed pairs of transmembrane channels, the connexons, through which materials of low MW diffuse from one cell to a neighboring cell. This chain is Gap junction delta-3 protein (Gjd3), found in Mus musculus (Mouse).